The sequence spans 487 residues: MTTLMVQGTTSDAGKSTLVTALCRWLLRQGVAVVPFKPQNMALNSAVTADGGEIGRAQAVQAQACRLAPHTDMNPVLLKPNSDTGAQVIVHGRAVTSMNAVAYHDYKVIAMQAVLASHERLRQAYPVVMVEGAGSPAEINLRAGDIANMGFAEAVDCPVILIADINRGGVFAHLVGTLELLSPSEQARVKGFVINRFRGDIALLQPGLDWLEQRTGKPVLGVLPYVTDLHLEAEDAIDVRQAVKGERVLKVIVPVLPRISNHTDFDPLRLHPQVDLQFIGPGQPIPPADLIILPGSKSVRADLSQLRERGWDSAIARHLRYGGKLIGICGGLQMLGHEVHDPLGLEGAAGSSAGLGLLDYSTVLEAEKQLRNVAGTLGLEQAPVSGYEIHAGVTHGPGLEHPAVQLDDGRNDGAISADGQILATYLHGLFEGSQSCAALLRWAGLADAQAIDYEALRERDIERLADLVEQHLDTERLRQLCGVTADA.

The GATase cobBQ-type domain occupies 248–435 (VLKVIVPVLP…LHGLFEGSQS (188 aa)). Cys329 functions as the Nucleophile in the catalytic mechanism. The active site involves His427.

This sequence belongs to the CobB/CobQ family. CobQ subfamily.

The protein operates within cofactor biosynthesis; adenosylcobalamin biosynthesis. Its function is as follows. Catalyzes amidations at positions B, D, E, and G on adenosylcobyrinic A,C-diamide. NH(2) groups are provided by glutamine, and one molecule of ATP is hydrogenolyzed for each amidation. In Pseudomonas entomophila (strain L48), this protein is Cobyric acid synthase.